Reading from the N-terminus, the 159-residue chain is NADH-quinone oxidoreductase subunit I (159 aa).

4Fe-4S ferredoxin-type domains lie at 51–80 and 90–119; these read RRYENGEERCIACKLCEAICPAQAIVIEAD and TRYDIDMTKCIYCGLCQEACPVDAIVEGPN. Cys60, Cys63, Cys66, Cys70, Cys99, Cys102, Cys105, and Cys109 together coordinate [4Fe-4S] cluster.

Belongs to the complex I 23 kDa subunit family. As to quaternary structure, NDH-1 is composed of 14 different subunits. Subunits NuoA, H, J, K, L, M, N constitute the membrane sector of the complex. Requires [4Fe-4S] cluster as cofactor.

Its subcellular location is the cell membrane. The enzyme catalyses a quinone + NADH + 5 H(+)(in) = a quinol + NAD(+) + 4 H(+)(out). In terms of biological role, NDH-1 shuttles electrons from NADH, via FMN and iron-sulfur (Fe-S) centers, to quinones in the respiratory chain. The immediate electron acceptor for the enzyme in this species is believed to be ubiquinone. Couples the redox reaction to proton translocation (for every two electrons transferred, four hydrogen ions are translocated across the cytoplasmic membrane), and thus conserves the redox energy in a proton gradient. In Rickettsia africae (strain ESF-5), this protein is NADH-quinone oxidoreductase subunit I.